A 639-amino-acid polypeptide reads, in one-letter code: Probable endo-1,3(4)-beta-glucanase ACLA_073210 (639 aa).

Positions 1 to 21 (MAPSSLLLSVGSLIASSLASA) are cleaved as a signal peptide. Residues 26 to 290 (IREQSQSYQL…WAGNVFGESG (265 aa)) form the GH16 domain. N-linked (GlcNAc...) asparagine glycosylation occurs at N65. E146 functions as the Nucleophile in the catalytic mechanism. The Proton donor role is filled by E151. 2 disordered regions span residues 337-384 (TVAS…TVAE) and 442-545 (QSSS…GSSI). The segment covering 339-348 (ASPNTASEVH) has biased composition (polar residues). Composition is skewed to low complexity over residues 362–376 (PTVP…VPPA) and 478–488 (TTTEAVAETET). A lipid anchor (GPI-anchor amidated alanine) is attached at A617. Residues 618–639 (GARKLSVGLSGLVGALAVAALA) constitute a propeptide, removed in mature form.

It belongs to the glycosyl hydrolase 16 family.

It localises to the cell membrane. The catalysed reaction is Endohydrolysis of (1-&gt;3)- or (1-&gt;4)-linkages in beta-D-glucans when the glucose residue whose reducing group is involved in the linkage to be hydrolyzed is itself substituted at C-3.. Its function is as follows. Mixed-linked glucanase involved in the degradation of complex natural cellulosic substrates. This chain is Probable endo-1,3(4)-beta-glucanase ACLA_073210, found in Aspergillus clavatus (strain ATCC 1007 / CBS 513.65 / DSM 816 / NCTC 3887 / NRRL 1 / QM 1276 / 107).